We begin with the raw amino-acid sequence, 361 residues long: Histidine biosynthesis bifunctional protein HisB (361 aa).

Residues 1-172 (MSQPTLFIDR…PKTTACERPP (172 aa)) form a histidinol-phosphatase region. The Nucleophile role is filled by Asp9. Residues Asp9 and Asp11 each contribute to the Mg(2+) site. Catalysis depends on Asp11, which acts as the Proton donor. Zn(2+) is bound by residues Cys92, His94, Cys100, and Cys102. Mg(2+) is bound at residue Asp129. Positions 173-361 (RYAEVVRTTK…NELPSSKGVL (189 aa)) are imidazoleglycerol-phosphate dehydratase.

This sequence in the N-terminal section; belongs to the histidinol-phosphatase family. It in the C-terminal section; belongs to the imidazoleglycerol-phosphate dehydratase family. The cofactor is Mg(2+). Requires Zn(2+) as cofactor.

The protein resides in the cytoplasm. It catalyses the reaction D-erythro-1-(imidazol-4-yl)glycerol 3-phosphate = 3-(imidazol-4-yl)-2-oxopropyl phosphate + H2O. The catalysed reaction is L-histidinol phosphate + H2O = L-histidinol + phosphate. It functions in the pathway amino-acid biosynthesis; L-histidine biosynthesis; L-histidine from 5-phospho-alpha-D-ribose 1-diphosphate: step 6/9. It participates in amino-acid biosynthesis; L-histidine biosynthesis; L-histidine from 5-phospho-alpha-D-ribose 1-diphosphate: step 8/9. The chain is Histidine biosynthesis bifunctional protein HisB from Actinobacillus pleuropneumoniae serotype 7 (strain AP76).